Reading from the N-terminus, the 407-residue chain is Putative aspartate aminotransferase, cytoplasmic 2 (407 aa).

N6-(pyridoxal phosphate)lysine is present on Lys-249.

The protein belongs to the class-I pyridoxal-phosphate-dependent aminotransferase family. Homodimer. The cofactor is pyridoxal 5'-phosphate.

Its subcellular location is the cytoplasm. The enzyme catalyses L-aspartate + 2-oxoglutarate = oxaloacetate + L-glutamate. In Bos taurus (Bovine), this protein is Putative aspartate aminotransferase, cytoplasmic 2 (GOT1L1).